The following is a 125-amino-acid chain: Photosystem II extrinsic protein U (125 aa).

Positions 1–29 (MKRLLSWLTGLVVMAGLLFSLATPSGVQA) are cleaved as a signal peptide.

It belongs to the PsbU family. As to quaternary structure, PSII is composed of 1 copy each of membrane proteins PsbA, PsbB, PsbC, PsbD, PsbE, PsbF, PsbH, PsbI, PsbJ, PsbK, PsbL, PsbM, PsbT, PsbX, PsbY, PsbZ, Psb30/Ycf12, peripheral proteins PsbO, CyanoQ (PsbQ), PsbU, PsbV and a large number of cofactors. It forms dimeric complexes.

The protein resides in the cellular thylakoid membrane. Its function is as follows. One of the extrinsic, lumenal subunits of photosystem II (PSII). PSII is a light-driven water plastoquinone oxidoreductase, using light energy to abstract electrons from H(2)O, generating a proton gradient subsequently used for ATP formation. The extrinsic proteins stabilize the structure of photosystem II oxygen-evolving complex (OEC), the ion environment of oxygen evolution and protect the OEC against heat-induced inactivation. The chain is Photosystem II extrinsic protein U from Synechococcus sp. (strain WH7803).